Consider the following 282-residue polypeptide: Hydrogenase expression/formation protein HoxQ (282 aa).

This sequence belongs to the HupH/HyaF family.

The polypeptide is Hydrogenase expression/formation protein HoxQ (hoxQ) (Cupriavidus necator (strain ATCC 17699 / DSM 428 / KCTC 22496 / NCIMB 10442 / H16 / Stanier 337) (Ralstonia eutropha)).